Reading from the N-terminus, the 645-residue chain is Translation factor GUF1 homolog, mitochondrial (645 aa).

The tr-type G domain occupies 40 to 215 (DKIRNFGIVA…AIIDRVPAPT (176 aa)). GTP-binding positions include 49-56 (AHVDHGKS), 108-112 (DTPGH), and 162-165 (NKID).

It belongs to the TRAFAC class translation factor GTPase superfamily. Classic translation factor GTPase family. LepA subfamily.

It is found in the mitochondrion inner membrane. It catalyses the reaction GTP + H2O = GDP + phosphate + H(+). Functionally, promotes mitochondrial protein synthesis. May act as a fidelity factor of the translation reaction, by catalyzing a one-codon backward translocation of tRNAs on improperly translocated ribosomes. Binds to mitochondrial ribosomes in a GTP-dependent manner. The chain is Translation factor GUF1 homolog, mitochondrial from Caenorhabditis elegans.